The following is a 240-amino-acid chain: tRNA (guanine-N(1)-)-methyltransferase (240 aa).

Residues Gly-108 and 127 to 132 contribute to the S-adenosyl-L-methionine site; that span reads LGDYIL.

The protein belongs to the RNA methyltransferase TrmD family. Homodimer.

It localises to the cytoplasm. It catalyses the reaction guanosine(37) in tRNA + S-adenosyl-L-methionine = N(1)-methylguanosine(37) in tRNA + S-adenosyl-L-homocysteine + H(+). Specifically methylates guanosine-37 in various tRNAs. The sequence is that of tRNA (guanine-N(1)-)-methyltransferase from Streptococcus sanguinis (strain SK36).